A 186-amino-acid chain; its full sequence is Ribosome-recycling factor (186 aa).

The protein belongs to the RRF family.

It localises to the cytoplasm. In terms of biological role, responsible for the release of ribosomes from messenger RNA at the termination of protein biosynthesis. May increase the efficiency of translation by recycling ribosomes from one round of translation to another. The sequence is that of Ribosome-recycling factor from Beijerinckia indica subsp. indica (strain ATCC 9039 / DSM 1715 / NCIMB 8712).